Reading from the N-terminus, the 321-residue chain is Nucleus-vacuole junction protein 1 (321 aa).

Positions 1–22 (MTRPPLVRGIFSLGLSVAVLKG) are cleaved as a signal peptide. A TSC13-binding region spans residues 73–125 (ELSWRKVFNFISRQSSELDARIYVLILLLSFLLPIAWTVLDGDRETTLEDKDN). Residues 94–114 (IYVLILLLSFLLPIAWTVLDG) traverse the membrane as a helical segment. An OSH1-binding region spans residues 139-195 (KHYNDGERAVLQFGKNRSEPIILSYKDMNVLEGEHEFTSKEEHSNSHLTSKSENALS). Residue Ser156 is modified to Phosphoserine. Basic and acidic residues predominate over residues 174–183 (EFTSKEEHSN). The disordered stretch occupies residues 174-194 (EFTSKEEHSNSHLTSKSENAL). The span at 184 to 194 (SHLTSKSENAL) shows a compositional bias: polar residues. Ser199 carries the post-translational modification Phosphoserine. The disordered stretch occupies residues 210–275 (QLEEDKNEPN…SLKSSTSFPI (66 aa)). The VAC8-binding stretch occupies residues 233–321 (DCSSSSEVES…EQAYSQPFRY (89 aa)). The span at 242–262 (SQSKCRKESTAEPDSLSRDTR) shows a compositional bias: basic and acidic residues. A compositionally biased stretch (low complexity) spans 263–272 (TTSSLKSSTS). A phosphoserine mark is found at Ser285 and Ser298. Positions 299–321 (PTKSSNLDAQVNTEQAYSQPFRY) are disordered.

Interacts with OSH1, TSC13 and VAC8.

The protein resides in the nucleus outer membrane. Its function is as follows. Involved in the formation of nucleus-vacuole (NV) junctions during piecemeal microautophagy of the nucleus (PMN). NV junctions are interorganelle interfaces mediated by NVJ1 in the nuclear envelope and VAC8 on the vacuole membrane. Together, NVJ1 and VAC8 form Velcro-like patches through which teardrop-like portions of the nucleus are pinched off into the vacuolar lumen and degraded by the PMN process. Also acts as an outer-nuclear membrane receptor for OSH1 and TSC13. The protein is Nucleus-vacuole junction protein 1 (NVJ1) of Saccharomyces cerevisiae (strain YJM789) (Baker's yeast).